We begin with the raw amino-acid sequence, 431 residues long: REST corepressor 1 (431 aa).

Over residues 1–10 the composition is skewed to basic and acidic residues; the sequence is MIEKGAEISG. A disordered region spans residues 1-53; the sequence is MIEKGAEISGKRRGRNNAANSKSLGTNVNGSNSWEEGSSSSSSDDEPGGGGMR. The segment covering 17–28 has biased composition (polar residues); sequence NAANSKSLGTNV. Residues 29–42 show a composition bias toward low complexity; sequence NGSNSWEEGSSSSS. The 86-residue stretch at 50 to 135 folds into the ELM2 domain; sequence GGMRVGLQYQ…KSLADLLNFT (86 aa). Residues 136–187 enclose the SANT 1 domain; that stretch reads PFPDEWTVEDRVLFEQAFSFHGKTFHRIQQMLPDKSIASLVKFYYSWKKTRS. The segment at 190–262 is disordered; that stretch reads SVMDRHARKQ…NRAKRKPPNG (73 aa). The span at 224 to 242 shows a compositional bias: basic and acidic residues; the sequence is EQPKEAKKEVPKNDTVPHI. The stretch at 267 to 314 forms a coiled coil; it reads QEDVEAVSANANAATTVLRQLDMELVSIKRQIQNIKQTNSAFKEKLQG. In terms of domain architecture, SANT 2 spans 327–378; the sequence is KFNARWTTEEQLLAVQAIRMYGRDFQAISDVIGNKSVVQVKNFFVNYRRRFN.

The protein belongs to the CoREST family. In terms of assembly, component of a BHC histone deacetylase complex that contains KDM1A. In terms of tissue distribution, expressed in territories in which neurogenesis takes place.

It is found in the nucleus. Functionally, essential component of the BHC complex, a corepressor complex that represses transcription of neuron-specific genes in non-neuronal cells. The BHC complex is recruited at RE1/NRSE sites by REST and acts by deacetylating and demethylating specific sites on histones, thereby acting as a chromatin modifier. In the BHC complex, it serves as a molecular beacon for the recruitment of molecular machinery that imposes silencing across a chromosomal interval. Plays a central role in demethylation of Lys-4 of histone H3 by promoting demethylase activity of KDM1A on core histones and nucleosomal substrates. The polypeptide is REST corepressor 1 (rcor1) (Xenopus laevis (African clawed frog)).